We begin with the raw amino-acid sequence, 364 residues long: Probable UDP-arabinopyranose mutase 1 (364 aa).

The DXD motif motif lies at 110–112; it reads DDD. N-linked (Glc...) arginine glycosylation is present at arginine 158.

Belongs to the RGP family. Homopentamer or homohexamer. The cofactor is Mn(2+). Mg(2+) is required as a cofactor. In terms of processing, reversibly glycosylated by UDP-glucose, UDP-xylose and UDP-galactose.

It is found in the secreted. The protein localises to the cell wall. It localises to the cell junction. The protein resides in the plasmodesma. Its subcellular location is the golgi apparatus. It catalyses the reaction UDP-beta-L-arabinofuranose = UDP-beta-L-arabinopyranose. Its function is as follows. Probable UDP-L-arabinose mutase involved in the biosynthesis of cell wall non-cellulosic polysaccharides. Was initially shown to possess an autoglycosylating activity which is dependent on the presence of UDP-glucose and manganese. The chain is Probable UDP-arabinopyranose mutase 1 from Zea mays (Maize).